A 339-amino-acid chain; its full sequence is Ketol-acid reductoisomerase (NADP(+)) (339 aa).

The region spanning 1–182 is the KARI N-terminal Rossmann domain; it reads MRVYYDRDAD…GGGRAGIIET (182 aa). NADP(+)-binding positions include 24-27, arginine 48, serine 51, threonine 53, and 83-86; these read YGSQ and DELQ. Histidine 108 is an active-site residue. NADP(+) is bound at residue glycine 134. One can recognise a KARI C-terminal knotted domain in the interval 183–328; that stretch reads TFKEECETDL…AKLRGMMPWI (146 aa). 4 residues coordinate Mg(2+): aspartate 191, glutamate 195, glutamate 227, and glutamate 231. Position 252 (serine 252) interacts with substrate.

Belongs to the ketol-acid reductoisomerase family. Mg(2+) is required as a cofactor.

It carries out the reaction (2R)-2,3-dihydroxy-3-methylbutanoate + NADP(+) = (2S)-2-acetolactate + NADPH + H(+). The catalysed reaction is (2R,3R)-2,3-dihydroxy-3-methylpentanoate + NADP(+) = (S)-2-ethyl-2-hydroxy-3-oxobutanoate + NADPH + H(+). The protein operates within amino-acid biosynthesis; L-isoleucine biosynthesis; L-isoleucine from 2-oxobutanoate: step 2/4. It functions in the pathway amino-acid biosynthesis; L-valine biosynthesis; L-valine from pyruvate: step 2/4. Its function is as follows. Involved in the biosynthesis of branched-chain amino acids (BCAA). Catalyzes an alkyl-migration followed by a ketol-acid reduction of (S)-2-acetolactate (S2AL) to yield (R)-2,3-dihydroxy-isovalerate. In the isomerase reaction, S2AL is rearranged via a Mg-dependent methyl migration to produce 3-hydroxy-3-methyl-2-ketobutyrate (HMKB). In the reductase reaction, this 2-ketoacid undergoes a metal-dependent reduction by NADPH to yield (R)-2,3-dihydroxy-isovalerate. In Methylorubrum populi (strain ATCC BAA-705 / NCIMB 13946 / BJ001) (Methylobacterium populi), this protein is Ketol-acid reductoisomerase (NADP(+)).